We begin with the raw amino-acid sequence, 923 residues long: Glucosidase 2 subunit alpha (923 aa).

The N-terminal stretch at 1 to 25 (MRYHGICWFIFQAAIIFAIFGSCQG) is a signal peptide. The N-linked (GlcNAc...) asparagine glycan is linked to Asn262. Asp524 functions as the Nucleophile in the catalytic mechanism. The active site involves Glu527. N-linked (GlcNAc...) asparagine glycosylation is present at Asn563. Asp600 serves as the catalytic Proton donor. A glycan (N-linked (GlcNAc...) asparagine) is linked at Asn822.

The protein belongs to the glycosyl hydrolase 31 family. As to quaternary structure, heterodimer of a catalytic subunit alpha (gls2) and a subunit beta (gtb1).

It is found in the endoplasmic reticulum. It carries out the reaction N(4)-(alpha-D-Glc-(1-&gt;3)-alpha-D-Man-(1-&gt;2)-alpha-D-Man-(1-&gt;2)-alpha-D-Man-(1-&gt;3)-[alpha-D-Man-(1-&gt;2)-alpha-D-Man-(1-&gt;3)-[alpha-D-Man-(1-&gt;2)-alpha-D-Man-(1-&gt;6)]-alpha-D-Man-(1-&gt;6)]-beta-D-Man-(1-&gt;4)-beta-D-GlcNAc-(1-&gt;4)-beta-D-GlcNAc)-L-asparaginyl-[protein] + H2O = N(4)-(alpha-D-Man-(1-&gt;2)-alpha-D-Man-(1-&gt;2)-alpha-D-Man-(1-&gt;3)-[alpha-D-Man-(1-&gt;2)-alpha-D-Man-(1-&gt;3)-[alpha-D-Man-(1-&gt;2)-alpha-D-Man-(1-&gt;6)]-alpha-D-Man-(1-&gt;6)]-beta-D-Man-(1-&gt;4)-beta-D-GlcNAc-(1-&gt;4)-beta-D-GlcNAc)-L-asparaginyl-[protein] (N-glucan mannose isomer 9A1,2,3B1,2,3) + beta-D-glucose. The catalysed reaction is N(4)-(alpha-D-Glc-(1-&gt;3)-alpha-D-Glc-(1-&gt;3)-alpha-D-Man-(1-&gt;2)-alpha-D-Man-(1-&gt;2)-alpha-D-Man-(1-&gt;3)-[alpha-D-Man-(1-&gt;2)-alpha-D-Man-(1-&gt;3)-[alpha-D-Man-(1-&gt;2)-alpha-D-Man-(1-&gt;6)]-alpha-D-Man-(1-&gt;6)]-beta-D-Man-(1-&gt;4)-beta-D-GlcNAc-(1-&gt;4)-beta-D-GlcNAc)-L-asparaginyl-[protein] + H2O = N(4)-(alpha-D-Glc-(1-&gt;3)-alpha-D-Man-(1-&gt;2)-alpha-D-Man-(1-&gt;2)-alpha-D-Man-(1-&gt;3)-[alpha-D-Man-(1-&gt;2)-alpha-D-Man-(1-&gt;3)-[alpha-D-Man-(1-&gt;2)-alpha-D-Man-(1-&gt;6)]-alpha-D-Man-(1-&gt;6)]-beta-D-Man-(1-&gt;4)-beta-D-GlcNAc-(1-&gt;4)-beta-D-GlcNAc)-L-asparaginyl-[protein] + beta-D-glucose. It functions in the pathway glycan metabolism; N-glycan metabolism. Functionally, catalytic subunit of glucosidase 2, which cleaves sequentially the 2 innermost alpha-1,3-linked glucose residues from the Glc(2)Man(9)GlcNAc(2) oligosaccharide precursor of immature glycoproteins. This chain is Glucosidase 2 subunit alpha, found in Schizosaccharomyces pombe (strain 972 / ATCC 24843) (Fission yeast).